A 293-amino-acid chain; its full sequence is Bifunctional protein FolD (293 aa).

Residues 165-167 (GRS), Ser190, and Ile231 contribute to the NADP(+) site.

This sequence belongs to the tetrahydrofolate dehydrogenase/cyclohydrolase family. In terms of assembly, homodimer.

It carries out the reaction (6R)-5,10-methylene-5,6,7,8-tetrahydrofolate + NADP(+) = (6R)-5,10-methenyltetrahydrofolate + NADPH. The enzyme catalyses (6R)-5,10-methenyltetrahydrofolate + H2O = (6R)-10-formyltetrahydrofolate + H(+). It functions in the pathway one-carbon metabolism; tetrahydrofolate interconversion. Its function is as follows. Catalyzes the oxidation of 5,10-methylenetetrahydrofolate to 5,10-methenyltetrahydrofolate and then the hydrolysis of 5,10-methenyltetrahydrofolate to 10-formyltetrahydrofolate. The sequence is that of Bifunctional protein FolD from Synechococcus sp. (strain CC9311).